The primary structure comprises 120 residues: Large ribosomal subunit protein uL18 (120 aa).

Residues 1-22 are disordered; that stretch reads MKTTRKESLKRRHRRIRRKVSG. Residues 8 to 20 show a composition bias toward basic residues; the sequence is SLKRRHRRIRRKV.

This sequence belongs to the universal ribosomal protein uL18 family. As to quaternary structure, part of the 50S ribosomal subunit; part of the 5S rRNA/L5/L18/L25 subcomplex. Contacts the 5S and 23S rRNAs.

This is one of the proteins that bind and probably mediate the attachment of the 5S RNA into the large ribosomal subunit, where it forms part of the central protuberance. The protein is Large ribosomal subunit protein uL18 of Crocosphaera subtropica (strain ATCC 51142 / BH68) (Cyanothece sp. (strain ATCC 51142)).